A 117-amino-acid chain; its full sequence is DNA-directed RNA polymerase subunit omega (117 aa).

This sequence belongs to the RNA polymerase subunit omega family. In terms of assembly, the RNAP catalytic core consists of 2 alpha, 1 beta, 1 beta' and 1 omega subunit. When a sigma factor is associated with the core the holoenzyme is formed, which can initiate transcription.

The catalysed reaction is RNA(n) + a ribonucleoside 5'-triphosphate = RNA(n+1) + diphosphate. Promotes RNA polymerase assembly. Latches the N- and C-terminal regions of the beta' subunit thereby facilitating its interaction with the beta and alpha subunits. In Roseobacter denitrificans (strain ATCC 33942 / OCh 114) (Erythrobacter sp. (strain OCh 114)), this protein is DNA-directed RNA polymerase subunit omega.